A 423-amino-acid polypeptide reads, in one-letter code: Histidine--tRNA ligase (423 aa).

It belongs to the class-II aminoacyl-tRNA synthetase family. In terms of assembly, homodimer.

The protein resides in the cytoplasm. It carries out the reaction tRNA(His) + L-histidine + ATP = L-histidyl-tRNA(His) + AMP + diphosphate + H(+). The protein is Histidine--tRNA ligase (hisS) of Pasteurella multocida (strain Pm70).